Here is a 109-residue protein sequence, read N- to C-terminus: Beta-keratin-related protein (109 aa).

Position 2 is an N-acetylserine (Ser2).

It belongs to the avian keratin family.

The chain is Beta-keratin-related protein (BKJ) from Coturnix japonica (Japanese quail).